Reading from the N-terminus, the 159-residue chain is MNITIITVGKIKEKYLRDAIEEYSKRLGRYCKLDIVELVDEKTPDNASEKEEEVIKEKEGQGILNKIKDNMFVIAMDLGGKQLTSEEFAGYIDNLGVTGNPNIAFIIGGSLGISKSVLARANYKLCFSKMTFPHQLFRVMLLEQIYRGFRIIKGEPYHK.

S-adenosyl-L-methionine is bound by residues glycine 108 and 127 to 132 (FSKMTF).

This sequence belongs to the RNA methyltransferase RlmH family. Homodimer.

It is found in the cytoplasm. The enzyme catalyses pseudouridine(1915) in 23S rRNA + S-adenosyl-L-methionine = N(3)-methylpseudouridine(1915) in 23S rRNA + S-adenosyl-L-homocysteine + H(+). Specifically methylates the pseudouridine at position 1915 (m3Psi1915) in 23S rRNA. The sequence is that of Ribosomal RNA large subunit methyltransferase H from Clostridium beijerinckii (strain ATCC 51743 / NCIMB 8052) (Clostridium acetobutylicum).